A 578-amino-acid chain; its full sequence is MEVKGEIYRVAGPVVTAIGLDAKMYDLCKVGNEGLMGEVIQIVGDKTIIQVYEETGGVRPGEPCVTTGMSLAVELGPGLLSSIYDGVQRPLHVLLERTGGFIGRGVTADGLDHKKLWEFKPVVKKGDRVIGGDVIGVVQETVNIEHKIMVRPDISGTVADIKSGSFTVVDTICTLTDGTELQMMQRWPVRKPRPVKRKLTPEKPLVTGQRILDGLFPVAKGGTAAIPGPFGSGKTVTQQQLSKWSDTEIVVYIGCGERGNEMADVLWEFPELEDPQTGRPLMERTILVANTSNMPVAAREASVYTGMTLAEYFRDMGYDVSLMADSTSRWAEAMREISSRLEEMPGEEGYPAYLSARLAEFYERAGVAETLCGEKGSITAIGAVSPPGGDFSEPVTQNTLRIVKVFWALDAKLSQKRHFPAINWLNSYSLYKEDLNDWFTENVAPDYVPMRERAMDMLQTESELQEIVQLVGSDALPEEQQLLLEITRMIREIFLQQNAFHPIDTYSPFEKQYKIMKAIMKWGDAAMDALKSGVLSSEILKMQSKDELPKVKFEEDFEGSLNAVLAKMDKEFAALGGK.

Residue 228–235 coordinates ATP; the sequence is GPFGSGKT.

This sequence belongs to the ATPase alpha/beta chains family. In terms of assembly, has multiple subunits with at least A(3), B(3), C, D, E, F, G, I and proteolipid K(x).

It is found in the cell membrane. The catalysed reaction is ATP + H2O + 4 H(+)(in) = ADP + phosphate + 5 H(+)(out). With respect to regulation, ATP hydrolysis stimulated by sulfite, ethanol, glycerol, magnesium and zinc ions, inhibited by diethylstilbestrol (DES) and less well by N,N-dicyclohexylcarbodiimide (DCCD). Functionally, component of the A-type ATP synthase that produces ATP from ADP in the presence of a proton gradient across the membrane. The A chain is the catalytic subunit. The sequence is that of A-type ATP synthase subunit A from Methanosarcina mazei (strain ATCC BAA-159 / DSM 3647 / Goe1 / Go1 / JCM 11833 / OCM 88) (Methanosarcina frisia).